We begin with the raw amino-acid sequence, 392 residues long: SH3 domain-binding protein 5-like (392 aa).

Residues 1–57 are disordered; sequence MADLKKAAGGRETPQGELRSEVVEDEGPRSPVAEEPGGSGSNSSETKLSPREEEELD. Thr13 is modified (phosphothreonine). Over residues 18-28 the composition is skewed to basic and acidic residues; sequence LRSEVVEDEGP. Ser30 and Ser49 each carry phosphoserine. 2 coiled-coil regions span residues 59–140 and 169–272; these read RIQE…YERA and WQEM…EQIH. The segment at 275–332 is disordered; the sequence is RRGLPPHPLGPRRSSPVGAEAGPEGIEDGDSGIEGAEGGGLEEGSSLGPGPGPDTDTL. A compositionally biased stretch (low complexity) spans 317–332; it reads EGSSLGPGPGPDTDTL. Phosphoserine occurs at positions 342, 349, 357, 361, and 377. The interval 364–392 is disordered; it reads GQELGAQSRGRRGSDIGVRGGRHQRSVSL. Residues 383-392 show a composition bias toward basic residues; the sequence is GGRHQRSVSL.

It belongs to the SH3BP5 family.

Functions as a guanine nucleotide exchange factor (GEF) for RAB11A. The protein is SH3 domain-binding protein 5-like (Sh3bp5l) of Mus musculus (Mouse).